We begin with the raw amino-acid sequence, 80 residues long: RNA-binding protein Hfq (80 aa).

In terms of domain architecture, Sm spans 9–69 (DVFLNQVRKE…ISTILPITPI (61 aa)).

This sequence belongs to the Hfq family. Homohexamer.

In terms of biological role, RNA chaperone that binds small regulatory RNA (sRNAs) and mRNAs to facilitate mRNA translational regulation in response to envelope stress, environmental stress and changes in metabolite concentrations. Also binds with high specificity to tRNAs. In Alkaliphilus metalliredigens (strain QYMF), this protein is RNA-binding protein Hfq.